Reading from the N-terminus, the 566-residue chain is Good for full DBP5 activity protein 2 (566 aa).

Residues M1–D16 are compositionally biased toward polar residues. The tract at residues M1–G41 is disordered.

In terms of biological role, high-copy suppressor of DBP5 mutation. The polypeptide is Good for full DBP5 activity protein 2 (GFD2) (Saccharomyces cerevisiae (strain ATCC 204508 / S288c) (Baker's yeast)).